An 892-amino-acid chain; its full sequence is DNA mismatch repair protein MutS (892 aa).

ATP is bound at residue 607–614; sequence GPNMSGKS. The disordered stretch occupies residues 833–854; the sequence is EESQLSFFGGEQSPKKQDKPVL. Basic and acidic residues predominate over residues 845-854; it reads SPKKQDKPVL.

This sequence belongs to the DNA mismatch repair MutS family.

In terms of biological role, this protein is involved in the repair of mismatches in DNA. It is possible that it carries out the mismatch recognition step. This protein has a weak ATPase activity. The sequence is that of DNA mismatch repair protein MutS from Bacillus cereus (strain Q1).